Here is a 76-residue protein sequence, read N- to C-terminus: Omega-conotoxin-like TxO5 (76 aa).

The signal sequence occupies residues 1–22; it reads MKLTCMMIVAVLFLTAWTFVTA. A propeptide spanning residues 23–48 is cleaved from the precursor; the sequence is ITSNGLENLFPKAHHEMKNPEASKLN. Cystine bridges form between Cys-51/Cys-66, Cys-58/Cys-70, and Cys-65/Cys-75.

This sequence belongs to the conotoxin O1 superfamily. Expressed by the venom duct.

It localises to the secreted. Its function is as follows. Omega-conotoxins act at presynaptic membranes, they bind and block voltage-gated calcium channels (Cav). This Conus textile (Cloth-of-gold cone) protein is Omega-conotoxin-like TxO5.